Consider the following 121-residue polypeptide: Small ribosomal subunit protein uS13 (121 aa).

The interval 92–121 (RKGLPVRGQSSKTNARTVKGPRKTVANKKK) is disordered. Basic residues predominate over residues 110-121 (KGPRKTVANKKK).

The protein belongs to the universal ribosomal protein uS13 family. As to quaternary structure, part of the 30S ribosomal subunit. Forms a loose heterodimer with protein S19. Forms two bridges to the 50S subunit in the 70S ribosome.

Its function is as follows. Located at the top of the head of the 30S subunit, it contacts several helices of the 16S rRNA. In the 70S ribosome it contacts the 23S rRNA (bridge B1a) and protein L5 of the 50S subunit (bridge B1b), connecting the 2 subunits; these bridges are implicated in subunit movement. Contacts the tRNAs in the A and P-sites. This chain is Small ribosomal subunit protein uS13, found in Mycoplasma capricolum subsp. capricolum (strain California kid / ATCC 27343 / NCTC 10154).